The chain runs to 356 residues: 5-formaminoimidazole-4-carboxamide-1-(beta)-D-ribofuranosyl 5'-monophosphate synthetase (356 aa).

5-amino-1-(5-phospho-beta-D-ribosyl)imidazole-4-carboxamide is bound by residues histidine 27 and serine 94. Residues 101–333 enclose the ATP-grasp domain; that stretch reads TENFADMAVP…YADLMEENLS (233 aa). Residues 145 to 196 and glutamate 226 each bind ATP; that span reads PHDI…TRYY. 5-amino-1-(5-phospho-beta-D-ribosyl)imidazole-4-carboxamide is bound at residue asparagine 255. 2 residues coordinate Mg(2+): glutamate 293 and glutamate 306.

The protein belongs to the phosphohexose mutase family. The cofactor is Mg(2+). Mn(2+) serves as cofactor.

The enzyme catalyses 5-amino-1-(5-phospho-beta-D-ribosyl)imidazole-4-carboxamide + formate + ATP = 5-formamido-1-(5-phospho-D-ribosyl)imidazole-4-carboxamide + ADP + phosphate. It participates in purine metabolism; IMP biosynthesis via de novo pathway; 5-formamido-1-(5-phospho-D-ribosyl)imidazole-4-carboxamide from 5-amino-1-(5-phospho-D-ribosyl)imidazole-4-carboxamide (formate route): step 1/1. Its function is as follows. Catalyzes the ATP- and formate-dependent formylation of 5-aminoimidazole-4-carboxamide-1-beta-d-ribofuranosyl 5'-monophosphate (AICAR) to 5-formaminoimidazole-4-carboxamide-1-beta-d-ribofuranosyl 5'-monophosphate (FAICAR) in the absence of folates. In Methanosarcina barkeri (strain Fusaro / DSM 804), this protein is 5-formaminoimidazole-4-carboxamide-1-(beta)-D-ribofuranosyl 5'-monophosphate synthetase.